The following is a 100-amino-acid chain: UPF0251 protein VVA1436 (100 aa).

It belongs to the UPF0251 family.

This chain is UPF0251 protein VVA1436, found in Vibrio vulnificus (strain YJ016).